The sequence spans 467 residues: Prenyltransferase GME11375 (467 aa).

Position 93 (Glu93) interacts with L-tryptophan. Positions 108, 196, 198, 266, 268, and 436 each coordinate dimethylallyl diphosphate.

This sequence belongs to the tryptophan dimethylallyltransferase family.

The protein operates within secondary metabolite biosynthesis. Prenyltransferase; part of the gene cluster that mediates the biosynthesis of dibenzodioxocinones such as pestalotiollide B, a novel class of inhibitors against cholesterol ester transfer protein (CEPT). The biosynthesis initiates from condensation of acetate and malonate units catalyzed by the non-reducing PKS pks8/GME11356. Pks8/GME11356 lacks a thioesterase (TE) domain, which is important to the cyclizing of the third ring of atrochrysone carboxylic acid, and the esterase GME11355 might play the role of TE and catalyzes the cyclization reaction of the C ring. The lactamase-like protein GME11357 (or other beta-lactamases in Pestalotiopsis microspora) probably hydrolyzes the thioester bond between the ACP of pks8/GME11356 and the intermediate to release atrochrysone carboxylic acid, which is spontaneously dehydrates to form endocrocin anthrone. Endocrocin anthrone is further converted to emodin via the endocrocin intermediate. Emodin is then oxidized by several enzymes such as the Baeyer-Villiger oxidase GME11358, the oxidoreductase GME11367, the short chain dehydrogenase/reductase GME11373, as well as by other oxidoreductases from the cluster, to modify the A and C rings and open the B ring, and finally yield monodictyphenone. The prenyltransferase GME11375 may catalyze the addition reaction between the C5 side chains and the carbon bone of dibenzodioxocinones. The remaining biochemical reactions to the final product dibenzodioxocinones should be methylation catalyzed by methyltransferase GME11366 and reduction and lactonization reaction catalyzed by a series of oxidordeuctases. This Pestalotiopsis microspora protein is Prenyltransferase GME11375.